We begin with the raw amino-acid sequence, 102 residues long: Integration host factor subunit beta (102 aa).

This sequence belongs to the bacterial histone-like protein family. Heterodimer of an alpha and a beta chain.

In terms of biological role, this protein is one of the two subunits of integration host factor, a specific DNA-binding protein that functions in genetic recombination as well as in transcriptional and translational control. The polypeptide is Integration host factor subunit beta (Rhodopseudomonas palustris (strain BisA53)).